The following is a 473-amino-acid chain: Glutamate--tRNA ligase 2 (473 aa).

The 'HIGH' region signature appears at P11–G21. The span at K113 to S133 shows a compositional bias: basic and acidic residues. Positions K113–P136 are disordered. Positions K240–R244 match the 'KMSKS' region motif. K243 is an ATP binding site.

This sequence belongs to the class-I aminoacyl-tRNA synthetase family. Glutamate--tRNA ligase type 1 subfamily. In terms of assembly, monomer.

It is found in the cytoplasm. It carries out the reaction tRNA(Glu) + L-glutamate + ATP = L-glutamyl-tRNA(Glu) + AMP + diphosphate. In terms of biological role, catalyzes the attachment of glutamate to tRNA(Glu) in a two-step reaction: glutamate is first activated by ATP to form Glu-AMP and then transferred to the acceptor end of tRNA(Glu). This chain is Glutamate--tRNA ligase 2, found in Brucella canis (strain ATCC 23365 / NCTC 10854 / RM-666).